The chain runs to 321 residues: MAQNLYGPRVRIGNWNEDVYLEEEIMKDFLAKRDKGQLLIQRNRRLKENLLRPMQLSVSEDGYIHYGDKVMLVSPDHPETEADLFLPGDLSLCMTPDEIKAHLSNELEVPCGLSAAQTKIPVGRNTFTILCAAGEVIGQVLRYGQNFRLGITGGFDDRMLYLSSDHRTLLKSSKRSWLQEVFLTHEDSYLNCWQAAFPHPQLRLEYEGSPVPANTKILITHCHTNRGLVAHRHLFLRTYFGQEAEVAAHTYLDSHRVEKPKNHWMLVTGAPRKDLSTMLDLPKPPAEDTRALEQEREQVSDPGARSTPDARGCVPQCTLPM.

A disordered region spans residues 275-321 (LSTMLDLPKPPAEDTRALEQEREQVSDPGARSTPDARGCVPQCTLPM). Over residues 285–299 (PAEDTRALEQEREQV) the composition is skewed to basic and acidic residues.

As to quaternary structure, microtubule inner protein component of sperm flagellar doublet microtubules. In terms of tissue distribution, expressed in trachea multiciliated cells.

Its subcellular location is the cytoplasm. The protein localises to the cytoskeleton. It is found in the cilium axoneme. It localises to the flagellum axoneme. Microtubule inner protein (MIP) part of the dynein-decorated doublet microtubules (DMTs) in cilia axoneme, which is required for motile cilia beating. This chain is Cilia- and flagella-associated protein 161, found in Bos taurus (Bovine).